The chain runs to 586 residues: Protein NRT1/ PTR FAMILY 5.3 (586 aa).

The next 11 helical transmembrane spans lie at 77–97 (WVGT…AHFG), 100–120 (ITFV…TLSV), 141–161 (ASVI…IGTG), 189–209 (FFNW…TVLV), 217–237 (WAIG…IFLL), 334–354 (PVLF…TLFI), 370–390 (IPPA…IVIY), 408–428 (ITLL…MIIA), 449–469 (AVPI…MGLA), 492–512 (LGTS…SILL), and 538–558 (NYYM…LVVI).

Belongs to the major facilitator superfamily. Proton-dependent oligopeptide transporter (POT/PTR) (TC 2.A.17) family. In terms of tissue distribution, expressed in roots and siliques.

The protein localises to the membrane. Peptide transporter. This chain is Protein NRT1/ PTR FAMILY 5.3 (NPF5.3), found in Arabidopsis thaliana (Mouse-ear cress).